The primary structure comprises 1507 residues: DNA-directed RNA polymerase subunit beta' (1507 aa).

Zn(2+) contacts are provided by C71, C73, C86, and C89. Positions 470, 472, and 474 each coordinate Mg(2+). The Zn(2+) site is built by C800, C874, C881, and C884.

It belongs to the RNA polymerase beta' chain family. As to quaternary structure, the RNAP catalytic core consists of 2 alpha, 1 beta, 1 beta' and 1 omega subunit. When a sigma factor is associated with the core the holoenzyme is formed, which can initiate transcription. Mg(2+) serves as cofactor. Requires Zn(2+) as cofactor.

It catalyses the reaction RNA(n) + a ribonucleoside 5'-triphosphate = RNA(n+1) + diphosphate. DNA-dependent RNA polymerase catalyzes the transcription of DNA into RNA using the four ribonucleoside triphosphates as substrates. The sequence is that of DNA-directed RNA polymerase subunit beta' from Nitratiruptor sp. (strain SB155-2).